A 263-amino-acid polypeptide reads, in one-letter code: Hydroxyethylthiazole kinase (263 aa).

Met-39 contributes to the substrate binding site. ATP-binding residues include Lys-115 and Thr-160. Gly-187 contacts substrate.

Belongs to the Thz kinase family. Requires Mg(2+) as cofactor.

It carries out the reaction 5-(2-hydroxyethyl)-4-methylthiazole + ATP = 4-methyl-5-(2-phosphooxyethyl)-thiazole + ADP + H(+). Its pathway is cofactor biosynthesis; thiamine diphosphate biosynthesis; 4-methyl-5-(2-phosphoethyl)-thiazole from 5-(2-hydroxyethyl)-4-methylthiazole: step 1/1. Its function is as follows. Catalyzes the phosphorylation of the hydroxyl group of 4-methyl-5-beta-hydroxyethylthiazole (THZ). This Staphylococcus aureus (strain bovine RF122 / ET3-1) protein is Hydroxyethylthiazole kinase.